Consider the following 155-residue polypeptide: Ribosomal RNA large subunit methyltransferase H (155 aa).

S-adenosyl-L-methionine contacts are provided by residues Leu72, Gly103, and Leu122 to Met127.

This sequence belongs to the RNA methyltransferase RlmH family. In terms of assembly, homodimer.

It is found in the cytoplasm. It carries out the reaction pseudouridine(1915) in 23S rRNA + S-adenosyl-L-methionine = N(3)-methylpseudouridine(1915) in 23S rRNA + S-adenosyl-L-homocysteine + H(+). Its function is as follows. Specifically methylates the pseudouridine at position 1915 (m3Psi1915) in 23S rRNA. The sequence is that of Ribosomal RNA large subunit methyltransferase H from Methylobacillus flagellatus (strain ATCC 51484 / DSM 6875 / VKM B-1610 / KT).